A 396-amino-acid chain; its full sequence is NADH-quinone oxidoreductase subunit D (396 aa).

This sequence belongs to the complex I 49 kDa subunit family. As to quaternary structure, NDH-1 is composed of 14 different subunits. Subunits NuoB, C, D, E, F, and G constitute the peripheral sector of the complex.

It localises to the cell inner membrane. It catalyses the reaction a quinone + NADH + 5 H(+)(in) = a quinol + NAD(+) + 4 H(+)(out). Functionally, NDH-1 shuttles electrons from NADH, via FMN and iron-sulfur (Fe-S) centers, to quinones in the respiratory chain. The immediate electron acceptor for the enzyme in this species is believed to be ubiquinone. Couples the redox reaction to proton translocation (for every two electrons transferred, four hydrogen ions are translocated across the cytoplasmic membrane), and thus conserves the redox energy in a proton gradient. The protein is NADH-quinone oxidoreductase subunit D of Rhizobium johnstonii (strain DSM 114642 / LMG 32736 / 3841) (Rhizobium leguminosarum bv. viciae).